The following is a 121-amino-acid chain: Large ribosomal subunit protein bL12 (121 aa).

The protein belongs to the bacterial ribosomal protein bL12 family. Homodimer. Part of the ribosomal stalk of the 50S ribosomal subunit. Forms a multimeric L10(L12)X complex, where L10 forms an elongated spine to which 2 to 4 L12 dimers bind in a sequential fashion. Binds GTP-bound translation factors.

In terms of biological role, forms part of the ribosomal stalk which helps the ribosome interact with GTP-bound translation factors. Is thus essential for accurate translation. The polypeptide is Large ribosomal subunit protein bL12 (Shewanella pealeana (strain ATCC 700345 / ANG-SQ1)).